The sequence spans 282 residues: DNA-3-methyladenine glycosylase 2 (282 aa).

Aspartate 238 functions as the Proton acceptor in the catalytic mechanism.

This sequence belongs to the alkylbase DNA glycosidase AlkA family. In terms of assembly, monomer.

It catalyses the reaction Hydrolysis of alkylated DNA, releasing 3-methyladenine, 3-methylguanine, 7-methylguanine and 7-methyladenine.. Functionally, hydrolysis of the deoxyribose N-glycosidic bond to excise 3-methyladenine, 3-methylguanine, 7-methylguanine, O2-methylthymine, and O2-methylcytosine from the damaged DNA polymer formed by alkylation lesions. This Escherichia coli (strain K12) protein is DNA-3-methyladenine glycosylase 2 (alkA).